Consider the following 152-residue polypeptide: Proteolipid protein 2 (152 aa).

In terms of domain architecture, MARVEL spans 19-137; that stretch reads FSRTRKGILL…DAYFTFPLRQ (119 aa). The next 3 membrane-spanning stretches (helical) occupy residues 25–45, 48–68, and 85–105; these read GILLLAEIILCLVILICFSAG, GYSSLSVVEMVLAIVFFVIYM, and FFRTLIAAILYLITSIFVLVE. A glycan (N-linked (GlcNAc...) asparagine) is linked at asparagine 108. A helical transmembrane segment spans residues 112–132; the sequence is IAAGVLGLLATCLFGYDAYFT.

Its subcellular location is the membrane. Functionally, may play a role in cell differentiation in the intestinal epithelium. The chain is Proteolipid protein 2 (PLP2) from Oryctolagus cuniculus (Rabbit).